Consider the following 614-residue polypeptide: Allergen Ara h 1, clone P17 (614 aa).

Residues 1 to 25 form the signal peptide; the sequence is MRGRVSPLMLLLGILVLASVSATQA. Disordered stretches follow at residues 72-177, 334-356, 372-397, and 464-491; these read DTGA…RRFS, NAGGEQEERGQRRRSTRSSDNEG, HAKSVSKKGSEEEDITNPINLRDGEP, and KEQQQRGRREQEWEEEEEDEEEEGSNRE. Positions 81–132 are enriched in basic and acidic residues; the sequence is PPGERTRGRQPGDYDDDRRQPRREEGGRWGPAEPREREREEDWRQPREDWRR. A Cupin type-1 1 domain is found at 169–327; that stretch reads FYFPSRRFST…AFNAEFNEIR (159 aa). The region spanning 390 to 566 is the Cupin type-1 2 domain; the sequence is INLRDGEPDL…AFPGSGEQVE (177 aa). The span at 464–474 shows a compositional bias: basic and acidic residues; that stretch reads KEQQQRGRREQ. Positions 475 to 486 are enriched in acidic residues; that stretch reads EWEEEEEDEEEE. Asn-516 carries an N-linked (GlcNAc...) asparagine glycan. Positions 572-614 are disordered; sequence QRESHFVSARPQSQSPSSPEKEDQEEENQGGKGPLLSILKAFN.

This sequence belongs to the 7S seed storage protein family.

This is Allergen Ara h 1, clone P17 from Arachis hypogaea (Peanut).